The chain runs to 261 residues: Putative phosphite transport system permease protein HtxE (261 aa).

Residues 47 to 253 (EATTETVEVL…VFVFVLDQLQ (207 aa)) enclose the ABC transmembrane type-1 domain. 3 consecutive transmembrane segments (helical) span residues 122–142 (LIVA…GVLA), 203–220 (RNLR…GGIG), and 229–249 (MFQY…VFVL).

This sequence belongs to the binding-protein-dependent transport system permease family.

It localises to the cell inner membrane. Functionally, probably forms part of a binding-protein-dependent hypophosphite transporter. The protein is Putative phosphite transport system permease protein HtxE (htxE) of Stutzerimonas stutzeri (Pseudomonas stutzeri).